We begin with the raw amino-acid sequence, 395 residues long: Flap endonuclease 1 (395 aa).

An N-domain region spans residues 1 to 104 (MGIKHLYQVI…GELAKRSARK (104 aa)). Residue aspartate 34 coordinates Mg(2+). Residues arginine 47 and arginine 70 each contribute to the DNA site. Aspartate 86 contacts Mg(2+). The disordered stretch occupies residues 99 to 126 (KRSARKREAHEAHEEAKETGTAEDMEKF). The segment at 122 to 253 (DMEKFSRRTV…NTALKLIREH (132 aa)) is I-domain. Glutamate 158, glutamate 160, aspartate 179, and aspartate 181 together coordinate Mg(2+). Glutamate 158 is a binding site for DNA. DNA-binding residues include glycine 231 and aspartate 233. Aspartate 233 contacts Mg(2+). Residues 341 to 349 (QQSRLEGFF) form an interaction with PCNA region. Basic and acidic residues predominate over residues 356–389 (EAEKASLKRKHDEKIEEQKKRKKEEAKAKKEAKA). The disordered stretch occupies residues 356–395 (EAEKASLKRKHDEKIEEQKKRKKEEAKAKKEAKARPRGAV).

It belongs to the XPG/RAD2 endonuclease family. FEN1 subfamily. In terms of assembly, interacts with PCNA. Three molecules of fen1 bind to one PCNA trimer with each molecule binding to one PCNA monomer. PCNA stimulates the nuclease activity without altering cleavage specificity. It depends on Mg(2+) as a cofactor. Phosphorylated. Phosphorylation upon DNA damage induces relocalization to the nuclear plasma.

It is found in the nucleus. The protein localises to the nucleolus. The protein resides in the nucleoplasm. It localises to the mitochondrion. Structure-specific nuclease with 5'-flap endonuclease and 5'-3' exonuclease activities involved in DNA replication and repair. During DNA replication, cleaves the 5'-overhanging flap structure that is generated by displacement synthesis when DNA polymerase encounters the 5'-end of a downstream Okazaki fragment. It enters the flap from the 5'-end and then tracks to cleave the flap base, leaving a nick for ligation. Also involved in the long patch base excision repair (LP-BER) pathway, by cleaving within the apurinic/apyrimidinic (AP) site-terminated flap. Acts as a genome stabilization factor that prevents flaps from equilibrating into structures that lead to duplications and deletions. Also possesses 5'-3' exonuclease activity on nicked or gapped double-stranded DNA, and exhibits RNase H activity. Also involved in replication and repair of rDNA and in repairing mitochondrial DNA. In Talaromyces stipitatus (strain ATCC 10500 / CBS 375.48 / QM 6759 / NRRL 1006) (Penicillium stipitatum), this protein is Flap endonuclease 1 (fen1).